Here is a 250-residue protein sequence, read N- to C-terminus: Pyrroloquinoline-quinone synthase (250 aa).

The protein belongs to the PqqC family.

It carries out the reaction 6-(2-amino-2-carboxyethyl)-7,8-dioxo-1,2,3,4,7,8-hexahydroquinoline-2,4-dicarboxylate + 3 O2 = pyrroloquinoline quinone + 2 H2O2 + 2 H2O + H(+). It functions in the pathway cofactor biosynthesis; pyrroloquinoline quinone biosynthesis. Its function is as follows. Ring cyclization and eight-electron oxidation of 3a-(2-amino-2-carboxyethyl)-4,5-dioxo-4,5,6,7,8,9-hexahydroquinoline-7,9-dicarboxylic-acid to PQQ. The protein is Pyrroloquinoline-quinone synthase of Xanthomonas oryzae pv. oryzae (strain PXO99A).